The chain runs to 238 residues: Lactate utilization protein A (238 aa).

Belongs to the LutA/YkgE family.

Its function is as follows. Is involved in L-lactate degradation and allows cells to grow with lactate as the sole carbon source. The chain is Lactate utilization protein A from Bacillus licheniformis (strain ATCC 14580 / DSM 13 / JCM 2505 / CCUG 7422 / NBRC 12200 / NCIMB 9375 / NCTC 10341 / NRRL NRS-1264 / Gibson 46).